The sequence spans 468 residues: Uronate isomerase (468 aa).

It belongs to the metallo-dependent hydrolases superfamily. Uronate isomerase family.

It catalyses the reaction D-glucuronate = D-fructuronate. It carries out the reaction aldehydo-D-galacturonate = keto-D-tagaturonate. Its pathway is carbohydrate metabolism; pentose and glucuronate interconversion. The sequence is that of Uronate isomerase from Bacteroides thetaiotaomicron (strain ATCC 29148 / DSM 2079 / JCM 5827 / CCUG 10774 / NCTC 10582 / VPI-5482 / E50).